Consider the following 71-residue polypeptide: DNA gyrase inhibitor YacG (71 aa).

Residues C9, C12, C28, and C32 each contribute to the Zn(2+) site. The segment at 43–71 (EEKRIPSQSESNDSDEWSEMPEQDPKPFN) is disordered. Over residues 54–64 (NDSDEWSEMPE) the composition is skewed to acidic residues.

This sequence belongs to the DNA gyrase inhibitor YacG family. In terms of assembly, interacts with GyrB. Requires Zn(2+) as cofactor.

Functionally, inhibits all the catalytic activities of DNA gyrase by preventing its interaction with DNA. Acts by binding directly to the C-terminal domain of GyrB, which probably disrupts DNA binding by the gyrase. The protein is DNA gyrase inhibitor YacG of Proteus mirabilis (strain HI4320).